The sequence spans 130 residues: UPF0102 protein RPA0323 (130 aa).

Belongs to the UPF0102 family.

This Rhodopseudomonas palustris (strain ATCC BAA-98 / CGA009) protein is UPF0102 protein RPA0323.